Consider the following 111-residue polypeptide: UPF0060 membrane protein XCC2880 (111 aa).

4 helical membrane passes run 8–28 (LLLFVATAVAELVGCYLPYLW), 34–54 (SVWLLLPAALSLAVFVWLLTL), 62–82 (VYAAYGGVYIATALLWLWWVD), and 91–111 (LLGAGCCLLGMAIIMFSPRSG).

Belongs to the UPF0060 family.

It localises to the cell inner membrane. This is UPF0060 membrane protein XCC2880 from Xanthomonas campestris pv. campestris (strain ATCC 33913 / DSM 3586 / NCPPB 528 / LMG 568 / P 25).